A 305-amino-acid chain; its full sequence is Methionyl-tRNA formyltransferase (305 aa).

Residue 111–114 (SLLP) coordinates (6S)-5,6,7,8-tetrahydrofolate.

Belongs to the Fmt family.

It carries out the reaction L-methionyl-tRNA(fMet) + (6R)-10-formyltetrahydrofolate = N-formyl-L-methionyl-tRNA(fMet) + (6S)-5,6,7,8-tetrahydrofolate + H(+). Attaches a formyl group to the free amino group of methionyl-tRNA(fMet). The formyl group appears to play a dual role in the initiator identity of N-formylmethionyl-tRNA by promoting its recognition by IF2 and preventing the misappropriation of this tRNA by the elongation apparatus. The chain is Methionyl-tRNA formyltransferase from Helicobacter pylori (strain HPAG1).